The following is a 744-amino-acid chain: Prestin (744 aa).

Residues 1–75 are Cytoplasmic-facing; it reads MDHAEENEIP…PITKWLPAYK (75 aa). Residues 76–104 traverse the membrane as a helical segment; that stretch reads FKEYVLGDLVSGISTGVLQLPQGLAFAML. Residues 105–108 are Extracellular-facing; sequence AAVP. A helical membrane pass occupies residues 109–126; it reads PVFGLYSSFYPVIMYCFF. Residues 127-137 lie on the Cytoplasmic side of the membrane; that stretch reads GTSRHISIGPF. A helical membrane pass occupies residues 138–149; the sequence is AVISLMIGGVAV. Residues 150-168 lie on the Extracellular side of the membrane; that stretch reads RLVPDDIVIPGGVNATNGT. The short motif at 158–168 is the Involved in motor function element; the sequence is IPGGVNATNGT. N-linked (GlcNAc...) asparagine glycosylation is found at asparagine 163 and asparagine 166. A helical transmembrane segment spans residues 169–196; it reads EARDALRVKVAMSVTLLSGIIQFCLGVC. The Cytoplasmic segment spans residues 197–206; it reads RFGFVAIYLT. A helical transmembrane segment spans residues 207–230; sequence EPLVRGFTTAAAVHVFTSMLKYLF. Topologically, residues 231-241 are extracellular; the sequence is GVKTKRYSGIF. The segment at residues 242-253 is an intramembrane region (helical); the sequence is SVVYSTVAVLQN. At 254–258 the chain is on the extracellular side; it reads VKNLN. Residues 259-276 form a helical membrane-spanning segment; the sequence is VCSLGVGLMVFGLLLGGK. Residues 277 to 291 are Cytoplasmic-facing; the sequence is EFNERFKEKLPAPIP. The helical transmembrane segment at 292-307 threads the bilayer; sequence LEFFAVVMGTGISAGF. The Extracellular portion of the chain corresponds to 308–332; that stretch reads NLHESYSVDVVGTLPLGLLPPANPD. Residues 333–359 traverse the membrane as a helical segment; the sequence is TSLFHLVYVDAIAIAIVGFSVTISMAK. The Cytoplasmic segment spans residues 360 to 370; that stretch reads TLANKHGYQVD. Residues 371–388 traverse the membrane as a helical segment; it reads GNQELIALGICNSIGSLF. At 389–396 the chain is on the extracellular side; sequence QTFSISCS. The chain crosses the membrane as a helical span at residues 397-406; it reads LSRSLVQEGT. Salicylate is bound at residue serine 398. The Cytoplasmic portion of the chain corresponds to 407-410; the sequence is GGKT. Residues 411 to 431 form a helical membrane-spanning segment; it reads QLAGCLASLMILLVILATGFL. The Extracellular portion of the chain corresponds to 432–436; sequence FESLP. The chain crosses the membrane as a helical span at residues 437 to 464; that stretch reads QAVLSAIVIVNLKGMFMQFSDLPFFWRT. Residue serine 465 is a topological domain, cytoplasmic. Residues 466–481 form a helical membrane-spanning segment; that stretch reads KIELTIWLTTFVSSLF. The Extracellular portion of the chain corresponds to 482 to 484; that stretch reads LGL. The chain crosses the membrane as a helical span at residues 485 to 504; sequence DYGLITAVIIALLTVIYRTQ. Residues 505–718 are extended region for STAS domain; the sequence is SPSYTVLGQL…AVLGSQVREA (214 aa). The Cytoplasmic portion of the chain corresponds to 505-744; sequence SPSYTVLGQL…PNATPTTPEA (240 aa). Positions 525-713 constitute an STAS domain; it reads AYEEVKEIPG…HSIHDAVLGS (189 aa). Positions 720 to 744 are disordered; sequence AEQETTVLPPQEDMEPNATPTTPEA.

The protein belongs to the SLC26A/SulP transporter (TC 2.A.53) family. Homodimer. Interacts (via STAS domain) with CALM; this interaction is calcium-dependent and the STAS domain interacts with only one lobe of CALM which is an elongated conformation. Interacts with MYH1. Specifically expressed in outer hair cells of cochleae (at protein level). Not detected in other cells of the organ of Corti.

The protein localises to the lateral cell membrane. It catalyses the reaction 2 hydrogencarbonate(in) + chloride(out) = 2 hydrogencarbonate(out) + chloride(in). Its activity is regulated as follows. Salicylate, an inhibitor of outer hair cell motility, acts as a competitive antagonist at the prestin anion-binding site. Its function is as follows. Voltage-sensitive motor protein that drives outer hair cell (OHC) electromotility (eM) and participates in sound amplification in the hearing organ. Converts changes in the transmembrane electric potential into mechanical displacements resulting in the coupling of its expansion to movement of a charged voltage sensor across the lipid membrane. The nature of the voltage sensor is not completely clear, and two models compete. In the first model, acts as an incomplete transporter where intracellular chloride anion acts as extrinsic voltage sensor that drives conformational change in the protein which is sufficient to produce a length change in the plane of the membrane and hence in the length of the OHC. The second model in which multiple charged amino acid residues are distributed at the intracellular and extracellular membrane interfaces that form an intrinsic voltage sensor, whose movement produces the non-linear capacitance (NLC). However, the effective voltage sensor may be the result of a hybrid voltage sensor assembled from intrinsic charge (charged residues) and extrinsic charge (bound anion). Notably, binding of anions to the anion-binding pocket partially neutralizes the intrinsic positive charge rather than to form an electrically negative sensor, therefore remaining charge may serve as voltage sensor that, after depolarization, moves from down (expanded state) to up (contracted) conformation, which is accompanied by an eccentric contraction of the intermembrane cross-sectional area of the protein as well as a major increase in the hydrophobic thickness of the protein having as consequences the plasma membrane thickening and the cell contraction after membrane depolarization. The anion-binding pocket transits from the inward-open (Down) state, where it is exposed toward the intracellular solvent in the absence of anion, to the occluded (Up) state upon anion binding. Salicylate competes for the anion-binding site and inhibits the voltage-sensor movement, and therefore inhibits the charge transfer and electromotility by displacing Cl(-) from the anion-binding site and by preventing the structural transitions to the contracted state. In addition, can act as a weak Cl(-)/HCO3(-) antiporter across the cell membrane and so regulate the intracellular pH of the outer hair cells (OHCs), while firstly found as being unable to mediate electrogenic anion transport. Moreover, supports a role in cardiac mechanical amplification serving as an elastic element to enhance the actomyosin- based sarcomere contraction system. This Rattus norvegicus (Rat) protein is Prestin.